The following is a 424-amino-acid chain: MKDNNNYNVLIVGNKGREYALAQRLQQDERVNALYFCLGNGGTQDLGENLECEHYEHIVELALKKQIHLAIISEEEFLVLGLTEMLEKAGILVFGASKEAAKLEASKSYMKAFVKECGIKSASYFETNDLKEALSYIQNASFPLVIKALNKNTSIVYQEEEAIKILEDAFKQSNEPVIIEPFLEGFELSVTALIANDDFILLPFCQNYKRLLEGDNGVNTGGMGAIAPANFFSNELEEKIKNHIFKPTLEKLQADNTPFKGVLLAEIVIIEEKGVLEPYLLDFSVRFKDIECQTILPLLESSLLDLCLATAKGELHSLELVFSKEFVMSVALVSRNYPTSSSPKQTLYIDPVDEKKGHLILGEVEQDNGVFESSGGRVIFAIGRGKSLLEARNHAYEIAQKVHFEGMFYRKDIGFKVLDLKEYS.

Positions 111-312 (KAFVKECGIK…LLDLCLATAK (202 aa)) constitute an ATP-grasp domain. Residue 137 to 189 (IQNASFPLVIKALNKNTSIVYQEEEAIKILEDAFKQSNEPVIIEPFLEGFELS) participates in ATP binding.

The protein belongs to the GARS family.

It carries out the reaction 5-phospho-beta-D-ribosylamine + glycine + ATP = N(1)-(5-phospho-beta-D-ribosyl)glycinamide + ADP + phosphate + H(+). It functions in the pathway purine metabolism; IMP biosynthesis via de novo pathway; N(1)-(5-phospho-D-ribosyl)glycinamide from 5-phospho-alpha-D-ribose 1-diphosphate: step 2/2. In Helicobacter pylori (strain ATCC 700392 / 26695) (Campylobacter pylori), this protein is Phosphoribosylamine--glycine ligase (purD).